A 282-amino-acid chain; its full sequence is Fibrinogen-like protein A (282 aa).

The first 24 residues, 1 to 24 (MFSFIMKAAILLILVGCISFCISS), serve as a signal peptide directing secretion. One can recognise a Fibrinogen C-terminal domain in the interval 61–281 (SHSPEYPRDC…FAEMKLRNRS (221 aa)). Intrachain disulfides connect Cys-70–Cys-101 and Cys-224–Cys-240.

The chain is Fibrinogen-like protein A from Apostichopus parvimensis (Warty sea cucumber).